The chain runs to 337 residues: Holliday junction branch migration complex subunit RuvB (337 aa).

Positions 1–27 are disordered; it reads MIEADRLVHAQPQGTEERDEQIDRAMR. The interval 4–187 is large ATPase domain (RuvB-L); it reads ADRLVHAQPQ…FGIPLRLEFY (184 aa). ATP is bound by residues Arg-27, Gly-68, Lys-71, Thr-72, Thr-73, 134 to 136, Arg-177, Tyr-187, and Arg-224; that span reads EDY. Position 72 (Thr-72) interacts with Mg(2+). The segment at 188-258 is small ATPAse domain (RuvB-S); sequence NVKDLSSIVT…VAESALDMLD (71 aa). Residues 261-337 form a head domain (RuvB-H) region; sequence VEGFDYMDRK…YQHFNLIQPE (77 aa). Positions 297, 316, and 321 each coordinate DNA.

The protein belongs to the RuvB family. As to quaternary structure, homohexamer. Forms an RuvA(8)-RuvB(12)-Holliday junction (HJ) complex. HJ DNA is sandwiched between 2 RuvA tetramers; dsDNA enters through RuvA and exits via RuvB. An RuvB hexamer assembles on each DNA strand where it exits the tetramer. Each RuvB hexamer is contacted by two RuvA subunits (via domain III) on 2 adjacent RuvB subunits; this complex drives branch migration. In the full resolvosome a probable DNA-RuvA(4)-RuvB(12)-RuvC(2) complex forms which resolves the HJ.

It localises to the cytoplasm. It carries out the reaction ATP + H2O = ADP + phosphate + H(+). Its function is as follows. The RuvA-RuvB-RuvC complex processes Holliday junction (HJ) DNA during genetic recombination and DNA repair, while the RuvA-RuvB complex plays an important role in the rescue of blocked DNA replication forks via replication fork reversal (RFR). RuvA specifically binds to HJ cruciform DNA, conferring on it an open structure. The RuvB hexamer acts as an ATP-dependent pump, pulling dsDNA into and through the RuvAB complex. RuvB forms 2 homohexamers on either side of HJ DNA bound by 1 or 2 RuvA tetramers; 4 subunits per hexamer contact DNA at a time. Coordinated motions by a converter formed by DNA-disengaged RuvB subunits stimulates ATP hydrolysis and nucleotide exchange. Immobilization of the converter enables RuvB to convert the ATP-contained energy into a lever motion, pulling 2 nucleotides of DNA out of the RuvA tetramer per ATP hydrolyzed, thus driving DNA branch migration. The RuvB motors rotate together with the DNA substrate, which together with the progressing nucleotide cycle form the mechanistic basis for DNA recombination by continuous HJ branch migration. Branch migration allows RuvC to scan DNA until it finds its consensus sequence, where it cleaves and resolves cruciform DNA. In Shewanella loihica (strain ATCC BAA-1088 / PV-4), this protein is Holliday junction branch migration complex subunit RuvB.